The sequence spans 90 residues: Protein LURE 1.2 (90 aa).

Residues 1 to 19 (MKLPIIFLTLLIFVSSCTS) form the signal peptide. N23 carries an N-linked (GlcNAc...) asparagine glycan. Cystine bridges form between C58-C75, C61-C82, and C65-C84. Residues 67 to 87 (RRGKYIRTCSFERKLCRCSIS) are PRK6 binding.

Belongs to the DEFL family. In terms of assembly, interacts with MDIS1, MIK1, MIK2 and TDR/PXY, but not with MDIS2. Binds to PRK6 LRRs. Expressed in the pistil. Detected exclusively in the synergid cells.

It is found in the secreted. Pollen tube attractants guiding pollen tubes to the ovular micropyle. Attracts specifically pollen tubes from A.thaliana, but not those from A.lyrata. Triggers endocytosis of MDIS1 in the pollen tube tip. This Arabidopsis thaliana (Mouse-ear cress) protein is Protein LURE 1.2.